A 262-amino-acid polypeptide reads, in one-letter code: MEKTIIYFPKGCVIGRFVKRYKRFFVNVLVDGEEVVAHTNNTGSMLGLLNSGTPVLLSPALNPTRKLQWTLELVWTGGTYPDENKLPSFPNKEGGVTPFHSGLGFWVGVNTLIPHKFFKLAFEAGLFPWTKGYSICNTETKIGMSRLDICLHGNGVPRLWVECKNVTLVENNVALFPDAVSLRGLKHLQELKKIIDSGERAATFYCVQRKDGKFFGPAASIDPQYTEMFWKVKKRGVEIYPYHIDITTKGLSLGPILPLLSE.

Belongs to the SfsA family.

This Lawsonia intracellularis (strain PHE/MN1-00) protein is Sugar fermentation stimulation protein homolog.